The primary structure comprises 367 residues: Queuine tRNA-ribosyltransferase (367 aa).

Aspartate 92 serves as the catalytic Proton acceptor. Residues 92-96 (DSGGF), aspartate 146, glutamine 188, and glycine 215 each bind substrate. Residues 246–252 (GVGTPKD) are RNA binding. Residue aspartate 265 is the Nucleophile of the active site. 4 residues coordinate Zn(2+): cysteine 303, cysteine 305, cysteine 308, and histidine 334.

This sequence belongs to the queuine tRNA-ribosyltransferase family. In terms of assembly, homodimer. Within each dimer, one monomer is responsible for RNA recognition and catalysis, while the other monomer binds to the replacement base PreQ1. Zn(2+) serves as cofactor.

The catalysed reaction is 7-aminomethyl-7-carbaguanine + guanosine(34) in tRNA = 7-aminomethyl-7-carbaguanosine(34) in tRNA + guanine. It participates in tRNA modification; tRNA-queuosine biosynthesis. In terms of biological role, catalyzes the base-exchange of a guanine (G) residue with the queuine precursor 7-aminomethyl-7-deazaguanine (PreQ1) at position 34 (anticodon wobble position) in tRNAs with GU(N) anticodons (tRNA-Asp, -Asn, -His and -Tyr). Catalysis occurs through a double-displacement mechanism. The nucleophile active site attacks the C1' of nucleotide 34 to detach the guanine base from the RNA, forming a covalent enzyme-RNA intermediate. The proton acceptor active site deprotonates the incoming PreQ1, allowing a nucleophilic attack on the C1' of the ribose to form the product. After dissociation, two additional enzymatic reactions on the tRNA convert PreQ1 to queuine (Q), resulting in the hypermodified nucleoside queuosine (7-(((4,5-cis-dihydroxy-2-cyclopenten-1-yl)amino)methyl)-7-deazaguanosine). The sequence is that of Queuine tRNA-ribosyltransferase from Francisella tularensis subsp. holarctica (strain FTNF002-00 / FTA).